The following is a 473-amino-acid chain: Flavonol 3-O-glucosyltransferase UGT89B1 (473 aa).

The active-site Proton acceptor is the H25. H25 provides a ligand contact to an anthocyanidin. Catalysis depends on D127, which acts as the Charge relay. A348, Q350, H365, W368, N369, S370, and E373 together coordinate UDP-alpha-D-glucose. A388 contacts an anthocyanidin. UDP-alpha-D-glucose contacts are provided by D389 and Q390.

This sequence belongs to the UDP-glycosyltransferase family.

The enzyme catalyses a flavonol + UDP-alpha-D-glucose = a flavonol 3-O-beta-D-glucoside + UDP + H(+). It carries out the reaction a 7-O-hydroxy-flavonol + UDP-alpha-D-glucose = a flavonol 7-O-beta-D-glucoside + UDP + H(+). Its function is as follows. Possesses quercetin 3-O-glucosyltransferase, 7-O-glucosyltransferase and 4'-O-glucosyltransferase activities in vitro. Also active in vitro on benzoates and benzoate derivatives. The chain is Flavonol 3-O-glucosyltransferase UGT89B1 from Arabidopsis thaliana (Mouse-ear cress).